The primary structure comprises 142 residues: FAD synthase (142 aa).

ATP-binding positions include 9–10 (TF), 14–17 (HPGH), and Asp-92.

The protein belongs to the archaeal FAD synthase family. As to quaternary structure, homodimer. The cofactor is a divalent metal cation.

The enzyme catalyses FMN + ATP + H(+) = FAD + diphosphate. It participates in cofactor biosynthesis; FAD biosynthesis; FAD from FMN: step 1/1. In terms of biological role, catalyzes the transfer of the AMP portion of ATP to flavin mononucleotide (FMN) to produce flavin adenine dinucleotide (FAD) coenzyme. This chain is FAD synthase, found in Haloferax volcanii (strain ATCC 29605 / DSM 3757 / JCM 8879 / NBRC 14742 / NCIMB 2012 / VKM B-1768 / DS2) (Halobacterium volcanii).